A 605-amino-acid polypeptide reads, in one-letter code: DNA mismatch repair protein MutL (605 aa).

This sequence belongs to the DNA mismatch repair MutL/HexB family.

Its function is as follows. This protein is involved in the repair of mismatches in DNA. It is required for dam-dependent methyl-directed DNA mismatch repair. May act as a 'molecular matchmaker', a protein that promotes the formation of a stable complex between two or more DNA-binding proteins in an ATP-dependent manner without itself being part of a final effector complex. The chain is DNA mismatch repair protein MutL from Exiguobacterium sp. (strain ATCC BAA-1283 / AT1b).